We begin with the raw amino-acid sequence, 332 residues long: Glycerol-3-phosphate dehydrogenase [NAD(P)+] (332 aa).

Ser-15, Trp-16, and Lys-110 together coordinate NADPH. Positions 110, 137, and 139 each coordinate sn-glycerol 3-phosphate. Ala-141 contributes to the NADPH binding site. Lys-192, Asp-245, Ser-255, Arg-256, and Asn-257 together coordinate sn-glycerol 3-phosphate. Residue Lys-192 is the Proton acceptor of the active site. Residue Arg-256 coordinates NADPH. Residue Glu-282 participates in NADPH binding.

It belongs to the NAD-dependent glycerol-3-phosphate dehydrogenase family.

It is found in the cytoplasm. The enzyme catalyses sn-glycerol 3-phosphate + NAD(+) = dihydroxyacetone phosphate + NADH + H(+). It catalyses the reaction sn-glycerol 3-phosphate + NADP(+) = dihydroxyacetone phosphate + NADPH + H(+). It functions in the pathway membrane lipid metabolism; glycerophospholipid metabolism. In terms of biological role, catalyzes the reduction of the glycolytic intermediate dihydroxyacetone phosphate (DHAP) to sn-glycerol 3-phosphate (G3P), the key precursor for phospholipid synthesis. The sequence is that of Glycerol-3-phosphate dehydrogenase [NAD(P)+] from Coxiella burnetii (strain CbuK_Q154) (Coxiella burnetii (strain Q154)).